The following is an 82-amino-acid chain: UPF0180 protein BAA_1480 (82 aa).

The protein belongs to the UPF0180 family.

The chain is UPF0180 protein BAA_1480 from Bacillus anthracis (strain A0248).